A 320-amino-acid polypeptide reads, in one-letter code: MFARSALGRSDQLVTALNSQKRQFVLTAATTALGSLLFSEDNRLASQMEKGLLHNKNAENSASIPNTANKFFSRPEAEYPGHVPLYTFEKMLMFLGSSVGAYTHPERNEFIVALGESTAITPVLRRLQHQMLSDPVGRQILRERPRMTSTSLDLEHLRELPDNTIGKTYVKWLDKEGVSPDTRVEVKYIDNEELAYIYQRYRECHDFYHAITGLPIIIEGEISVKVFEYMNIGIPMSGLGALFAPLRLKKSQKERLYNIYYPWAFKSGLNSKPLINVYWENILEEDIDEFRKTMGIEQPPDLRNLRKEYFKKLKEAKKIV.

Residues 1–31 constitute a mitochondrion transit peptide; that stretch reads MFARSALGRSDQLVTALNSQKRQFVLTAATT. Zn(2+)-binding residues include His-205, Asp-206, His-209, and Glu-221.

Belongs to the COQ4 family. In terms of assembly, component of a multi-subunit COQ enzyme complex, composed of at least COQ3, COQ4, COQ5, COQ6, COQ7 and COQ9. The cofactor is Zn(2+).

It is found in the mitochondrion inner membrane. The enzyme catalyses a 4-hydroxy-3-methoxy-5-(all-trans-polyprenyl)benzoate + H(+) = a 2-methoxy-6-(all-trans-polyprenyl)phenol + CO2. It participates in cofactor biosynthesis; ubiquinone biosynthesis. Lyase that catalyzes the C1-decarboxylation of 4-hydroxy-3-methoxy-5-(all-trans-polyprenyl)benzoic acid into 2-methoxy-6-(all-trans-polyprenyl)phenol during ubiquinone biosynthesis. The chain is Ubiquinone biosynthesis protein COQ4, mitochondrial from Scheffersomyces stipitis (strain ATCC 58785 / CBS 6054 / NBRC 10063 / NRRL Y-11545) (Yeast).